Consider the following 204-residue polypeptide: Small ribosomal subunit protein uS4 (204 aa).

The interval Ser-25–Tyr-47 is disordered. Residues Arg-93–Ala-156 form the S4 RNA-binding domain.

It belongs to the universal ribosomal protein uS4 family. Part of the 30S ribosomal subunit. Contacts protein S5. The interaction surface between S4 and S5 is involved in control of translational fidelity.

Its function is as follows. One of the primary rRNA binding proteins, it binds directly to 16S rRNA where it nucleates assembly of the body of the 30S subunit. With S5 and S12 plays an important role in translational accuracy. In Rhodospirillum centenum (strain ATCC 51521 / SW), this protein is Small ribosomal subunit protein uS4.